Here is a 371-residue protein sequence, read N- to C-terminus: Cytochrome b (371 aa).

Transmembrane regions (helical) follow at residues 25-45 (FGSM…FLAV), 69-90 (WMMQ…YIHI), 105-125 (WMSG…GYVL), and 170-190 (FFAL…LHII). The heme b site is built by H75 and H89. H174 and H188 together coordinate heme b. H193 is an a ubiquinone binding site. The next 4 membrane-spanning stretches (helical) occupy residues 218 to 238 (YKDL…VSFF), 280 to 300 (LGGA…PFTH), 312 to 332 (LSQL…WAAT), and 339 to 358 (YIII…ISMP).

The protein belongs to the cytochrome b family. The cytochrome bc1 complex contains 3 respiratory subunits (MT-CYB, CYC1 and UQCRFS1), 2 core proteins (UQCRC1 and UQCRC2) and probably 6 low-molecular weight proteins. Heme b serves as cofactor.

The protein localises to the mitochondrion inner membrane. In terms of biological role, component of the ubiquinol-cytochrome c reductase complex (complex III or cytochrome b-c1 complex) that is part of the mitochondrial respiratory chain. The b-c1 complex mediates electron transfer from ubiquinol to cytochrome c. Contributes to the generation of a proton gradient across the mitochondrial membrane that is then used for ATP synthesis. The sequence is that of Cytochrome b (MT-CYB) from Python molurus (Indian python).